The primary structure comprises 282 residues: MELKDYFPEMQVGPHPLGDKEWVSVKEGDQYVHFPKSCLSEKERLLLEVGLGQYEVLQPLGSPWQRYLLDHQGNPPQLFETSQFIYLNHQQVLPADLVELLQQMIAGLEVILPISTTQTAFLCRQATSIKVLRSLEGLLPTLESDFGLALTMFVGNAWYQVAAGTLRECFEEECQLLTAYLKQKSGGKLLTFAEVMLWSILSHQSFPALTRQFHQFLNPQSDMADVVHALWSEHGNLVQTAQRLYIHRNSLQYKLDKFAQQSGLHLKQLDDLAFAYLFLLKY.

Not essential for viability or growth. Nevertheless, uncontrolled production in E.coli is detrimental to the normal physiology of the bacteria. The sequence is that of Leucine-rich protein (lrp) from Streptococcus dysgalactiae subsp. equisimilis (Streptococcus equisimilis).